The chain runs to 499 residues: ADP,ATP carrier protein 5 (499 aa).

The next 11 membrane-spanning stretches (helical) occupy residues 25–45 (LGKF…QNVL), 61–81 (IAGF…VIIY), 93–113 (IFYY…FVIY), 148–168 (YIVY…LLFW), 183–203 (FYTL…FLMM), 223–243 (ITLV…CCLL), 286–306 (LWLL…VEAV), 327–347 (LYIL…NNIM), 356–376 (AVIS…LIVF), 380–400 (ILSL…VSIG), and 468–488 (LISP…IYAV).

The protein belongs to the ADP/ATP translocase tlc family.

It is found in the cell membrane. In terms of biological role, provides the rickettsial cell with host ATP in exchange for rickettsial ADP. This is an obligate exchange system. This energy acquiring activity is an important component of rickettsial parasitism. The polypeptide is ADP,ATP carrier protein 5 (tlcE) (Rickettsia conorii (strain ATCC VR-613 / Malish 7)).